A 535-amino-acid polypeptide reads, in one-letter code: Suppressor of cytokine signaling 6 (535 aa).

Positions Arg80–Gly89 are enriched in basic residues. The tract at residues Arg80–Ser105 is disordered. The 108-residue stretch at Trp384 to Val491 folds into the SH2 domain. Residues Arg486–Tyr535 enclose the SOCS box domain.

Interacts with RBCK1. Interacts with phosphorylated IRS4. Interacts with KIT (phosphorylated). Interacts with PIM3.

The protein operates within protein modification; protein ubiquitination. Functionally, SOCS family proteins form part of a classical negative feedback system that regulates cytokine signal transduction. May be a substrate recognition component of a SCF-like ECS (Elongin BC-CUL2/5-SOCS-box protein) E3 ubiquitin-protein ligase complex which mediates the ubiquitination and subsequent proteasomal degradation of target proteins. Regulates KIT degradation by ubiquitination of the tyrosine-phosphorylated receptor. The protein is Suppressor of cytokine signaling 6 (SOCS6) of Pongo abelii (Sumatran orangutan).